The chain runs to 751 residues: Probable alpha-galactosidase C (751 aa).

The signal sequence occupies residues 1-27 (MFGSPKRAALAAASLLAIFGNGPSVMA). N-linked (GlcNAc...) asparagine glycosylation is found at N49, N57, N162, N186, N194, N366, N433, N452, and N500. D510 serves as the catalytic Nucleophile. Residue D572 is the Proton donor of the active site. Residue N720 is glycosylated (N-linked (GlcNAc...) asparagine).

The protein belongs to the glycosyl hydrolase 36 family. In terms of assembly, homotetramer. Mg(2+) serves as cofactor. The cofactor is NAD(+).

Its subcellular location is the secreted. It catalyses the reaction Hydrolysis of terminal, non-reducing alpha-D-galactose residues in alpha-D-galactosides, including galactose oligosaccharides, galactomannans and galactolipids.. Hydrolyzes a variety of simple alpha-D-galactoside as well as more complex molecules such as oligosaccharides and polysaccharides. The protein is Probable alpha-galactosidase C (aglC) of Aspergillus flavus (strain ATCC 200026 / FGSC A1120 / IAM 13836 / NRRL 3357 / JCM 12722 / SRRC 167).